The sequence spans 356 residues: Putative transposase y4zB (356 aa).

Residues 1-19 (MITTGTPTTRRSAAGTAGA) show a composition bias toward low complexity. Disordered regions lie at residues 1–54 (MITT…PLAD) and 334–356 (PPPV…FAYV).

Belongs to the transposase 11 family.

This is Putative transposase y4zB from Sinorhizobium fredii (strain NBRC 101917 / NGR234).